The sequence spans 305 residues: Ribonuclease BN (305 aa).

Zn(2+) contacts are provided by histidine 64, histidine 66, aspartate 68, histidine 69, histidine 141, aspartate 212, and histidine 270. The active-site Proton acceptor is the aspartate 68.

This sequence belongs to the RNase Z family. RNase BN subfamily. Homodimer. It depends on Zn(2+) as a cofactor.

Its function is as follows. Zinc phosphodiesterase, which has both exoribonuclease and endoribonuclease activities. In Escherichia coli O6:K15:H31 (strain 536 / UPEC), this protein is Ribonuclease BN.